The sequence spans 355 residues: Epoxyqueuosine reductase (355 aa).

Residue D143 is the Proton donor of the active site. The 4Fe-4S ferredoxin-type domain occupies 185 to 217 (LPLPIDTPATAHCGTCTRCIDICPTQAIIAPHR). Residues C197, C200, C203, C207, C223, C250, C253, and C257 each coordinate [4Fe-4S] cluster.

The protein belongs to the QueG family. Monomer. Requires cob(II)alamin as cofactor. It depends on [4Fe-4S] cluster as a cofactor.

It is found in the cytoplasm. The catalysed reaction is epoxyqueuosine(34) in tRNA + AH2 = queuosine(34) in tRNA + A + H2O. It participates in tRNA modification; tRNA-queuosine biosynthesis. In terms of biological role, catalyzes the conversion of epoxyqueuosine (oQ) to queuosine (Q), which is a hypermodified base found in the wobble positions of tRNA(Asp), tRNA(Asn), tRNA(His) and tRNA(Tyr). This Xanthomonas campestris pv. campestris (strain ATCC 33913 / DSM 3586 / NCPPB 528 / LMG 568 / P 25) protein is Epoxyqueuosine reductase.